The chain runs to 186 residues: Elongation factor P (186 aa).

Belongs to the elongation factor P family.

It is found in the cytoplasm. It participates in protein biosynthesis; polypeptide chain elongation. Involved in peptide bond synthesis. Stimulates efficient translation and peptide-bond synthesis on native or reconstituted 70S ribosomes in vitro. Probably functions indirectly by altering the affinity of the ribosome for aminoacyl-tRNA, thus increasing their reactivity as acceptors for peptidyl transferase. This chain is Elongation factor P, found in Prochlorococcus marinus subsp. pastoris (strain CCMP1986 / NIES-2087 / MED4).